A 521-amino-acid chain; its full sequence is Vascular endothelial zinc finger 1 (521 aa).

The C2H2-type 1 zinc-finger motif lies at 74–96 (FVCTYCSKAFRDSYHLRRHESCH). Residues 140–155 (TTSSSGTNPSSSASTT) are compositionally biased toward low complexity. The disordered stretch occupies residues 140-167 (TTSSSGTNPSSSASTTAMPVTQSVKKPS). 5 C2H2-type zinc fingers span residues 174–196 (HACE…KLSH), 202–224 (FECP…VRSH), 232–255 (YTCS…KHVH), 261–283 (FKCQ…MVRH), and 287–308 (VSCN…LKTH). The residue at position 362 (lysine 362) is an N6-acetyllysine. 4 repeat units span residues 394–400 (PVTLTTP), 445–451 (PVTITSP), 457–463 (PLTLTTP), and 479–485 (PVTITSP). Residues 394–485 (PVTLTTPFSI…IAHPVTITSP (92 aa)) are 4 X 7 AA repeats of P-[LV]-T-[IL]-T-[ST]-P.

The protein belongs to the krueppel C2H2-type zinc-finger protein family. Interacts with ARHGAP22. Ubiquitously expressed. Highest levels in skeletal muscle and kidney.

Its subcellular location is the nucleus. In terms of biological role, possible transcription factor. Specifically binds to the CT/GC-rich region of the interleukin-3 promoter and mediates tax transactivation of IL-3. This Homo sapiens (Human) protein is Vascular endothelial zinc finger 1 (VEZF1).